A 471-amino-acid chain; its full sequence is FAD-linked oxidoreductase sorD (471 aa).

Positions 1-23 are cleaved as a signal peptide; it reads MQAASAFATCLLASVGGNSSAVA. Residues Asn18, Asn29, Asn174, Asn279, and Asn351 are each glycosylated (N-linked (GlcNAc...) asparagine). Residues 41-212 enclose the FAD-binding PCMH-type domain; it reads LLTTPSAIVW…TDFSIRTEPV (172 aa).

Belongs to the oxygen-dependent FAD-linked oxidoreductase family. The cofactor is FAD.

The protein operates within secondary metabolite biosynthesis. Its function is as follows. FAD-linked oxidoreductase; part of the gene cluster that mediates the biosynthesis of sorbicillinoids, a diverse group of yellow secondary metabolites that restrict growth of competing pathogenic fungi but not of bacteria. Sorbicillinoids biosynthesis requires the action of two PKSs. SorA iteratively combines three acetyl units and the growing chain is modified by the ketoacyl reductase subunit, and optional by the enoyl reductase subunit in the second cycle. The polyketide is then handed over to the PKS SorB, which adds three more acetyl units, and two methyl groups. SorB releases an aldehyde, which undergoes spontaneous cyclization resulting in the formation of sorbicillin or 2',3'-dihydrosorbicillin. The monooxygenase sorC oxidizes sorbicillin and 2',3'-dihydrosorbicillin to 2',3'-dihydrosorbicillinol and sorbicillinol, respectively. The oxidoreductase sorD further converts sorbicillinol into oxosorbicillinol. Sorbicillinol is the building block for the other sorbicillinoids such as disorbicillinol, bisvertinolon, and dihydrobisvertinolone. The polypeptide is FAD-linked oxidoreductase sorD (Penicillium rubens (strain ATCC 28089 / DSM 1075 / NRRL 1951 / Wisconsin 54-1255) (Penicillium chrysogenum)).